The following is a 258-amino-acid chain: Tryptophan synthase alpha chain (258 aa).

Residues Glu-47 and Asp-58 each act as proton acceptor in the active site.

Belongs to the TrpA family. In terms of assembly, tetramer of two alpha and two beta chains.

It carries out the reaction (1S,2R)-1-C-(indol-3-yl)glycerol 3-phosphate + L-serine = D-glyceraldehyde 3-phosphate + L-tryptophan + H2O. It participates in amino-acid biosynthesis; L-tryptophan biosynthesis; L-tryptophan from chorismate: step 5/5. Functionally, the alpha subunit is responsible for the aldol cleavage of indoleglycerol phosphate to indole and glyceraldehyde 3-phosphate. The protein is Tryptophan synthase alpha chain of Bacillus thuringiensis subsp. konkukian (strain 97-27).